The chain runs to 269 residues: Ribosomal RNA small subunit methyltransferase J (269 aa).

S-adenosyl-L-methionine contacts are provided by residues 124–125 (ER) and Asp188.

It belongs to the methyltransferase superfamily. RsmJ family.

It is found in the cytoplasm. The catalysed reaction is guanosine(1516) in 16S rRNA + S-adenosyl-L-methionine = N(2)-methylguanosine(1516) in 16S rRNA + S-adenosyl-L-homocysteine + H(+). Specifically methylates the guanosine in position 1516 of 16S rRNA. The chain is Ribosomal RNA small subunit methyltransferase J from Saccharophagus degradans (strain 2-40 / ATCC 43961 / DSM 17024).